The following is a 177-amino-acid chain: Large ribosomal subunit protein bL19 (177 aa).

The protein belongs to the bacterial ribosomal protein bL19 family.

In terms of biological role, this protein is located at the 30S-50S ribosomal subunit interface and may play a role in the structure and function of the aminoacyl-tRNA binding site. This Sinorhizobium medicae (strain WSM419) (Ensifer medicae) protein is Large ribosomal subunit protein bL19.